Consider the following 416-residue polypeptide: MSLVAIGINHKTATVDLREKVAFSPDKIHDAMKSLASRTKTGEAVIISTCNRTELYTNTGDEAEVIRWLEEYHQLSHEDVEPCLYKFEGQAVAQHLMRVSSGLDSLILGEPQILGQVKQSFVKAKEAGSVAITMDRLFQNTFSVAKKIRTETEIGAAAVSVAFAAVSMAKHIFSSLSTTKVLLVGAGETIELVARHLKDNGVDSMVVANRTLSRAEGMCEEFGATAITLEQIPDYLPQADIVISSTASPLPILGKGMVEKALKQRRHQPMLLVDIAVPRDIEAEVAELDDAFLYTVDDLQSIIEQNMASRREAAEQAEVIAEEQSHLFMEWVRSLESVDSIREYRTASMAIKDELVERAINKLAQGGDSEKLLLELANKLTNKLIHAPTQALTVASRQGDLNSIGQLRTALGLDKN.

Residues Thr-49–Arg-52, Ser-105, Glu-110–Gln-112, and Gln-116 each bind substrate. Cys-50 acts as the Nucleophile in catalysis. Position 185-190 (Gly-185–Ile-190) interacts with NADP(+).

It belongs to the glutamyl-tRNA reductase family. As to quaternary structure, homodimer.

The catalysed reaction is (S)-4-amino-5-oxopentanoate + tRNA(Glu) + NADP(+) = L-glutamyl-tRNA(Glu) + NADPH + H(+). Its pathway is porphyrin-containing compound metabolism; protoporphyrin-IX biosynthesis; 5-aminolevulinate from L-glutamyl-tRNA(Glu): step 1/2. Functionally, catalyzes the NADPH-dependent reduction of glutamyl-tRNA(Glu) to glutamate 1-semialdehyde (GSA). The sequence is that of Glutamyl-tRNA reductase from Shewanella sediminis (strain HAW-EB3).